A 552-amino-acid polypeptide reads, in one-letter code: Probable protein kinase UbiB (552 aa).

A Protein kinase domain is found at 121–504; it reads HFDTVPLASA…QGLQRRVVNA (384 aa). ATP contacts are provided by residues 127-135 and Lys149; that span reads LASASISQV. The Proton acceptor role is filled by Asp284. Transmembrane regions (helical) follow at residues 501-521 and 530-550; these read VVNA…YGLH and IPVW…SAWW.

It belongs to the ABC1 family. UbiB subfamily.

It localises to the cell inner membrane. Its pathway is cofactor biosynthesis; ubiquinone biosynthesis [regulation]. Functionally, is probably a protein kinase regulator of UbiI activity which is involved in aerobic coenzyme Q (ubiquinone) biosynthesis. This Xylella fastidiosa (strain M12) protein is Probable protein kinase UbiB.